Here is a 240-residue protein sequence, read N- to C-terminus: Phosphoribosylaminoimidazole-succinocarboxamide synthase (240 aa).

Belongs to the SAICAR synthetase family.

It carries out the reaction 5-amino-1-(5-phospho-D-ribosyl)imidazole-4-carboxylate + L-aspartate + ATP = (2S)-2-[5-amino-1-(5-phospho-beta-D-ribosyl)imidazole-4-carboxamido]succinate + ADP + phosphate + 2 H(+). The protein operates within purine metabolism; IMP biosynthesis via de novo pathway; 5-amino-1-(5-phospho-D-ribosyl)imidazole-4-carboxamide from 5-amino-1-(5-phospho-D-ribosyl)imidazole-4-carboxylate: step 1/2. This Wolbachia sp. subsp. Brugia malayi (strain TRS) protein is Phosphoribosylaminoimidazole-succinocarboxamide synthase.